The primary structure comprises 262 residues: Thiazole synthase (262 aa).

Catalysis depends on Lys104, which acts as the Schiff-base intermediate with DXP. 1-deoxy-D-xylulose 5-phosphate contacts are provided by residues Gly165, 191–192 (AG), and 213–214 (NT).

The protein belongs to the ThiG family. Homotetramer. Forms heterodimers with either ThiH or ThiS.

It localises to the cytoplasm. The catalysed reaction is [ThiS sulfur-carrier protein]-C-terminal-Gly-aminoethanethioate + 2-iminoacetate + 1-deoxy-D-xylulose 5-phosphate = [ThiS sulfur-carrier protein]-C-terminal Gly-Gly + 2-[(2R,5Z)-2-carboxy-4-methylthiazol-5(2H)-ylidene]ethyl phosphate + 2 H2O + H(+). It functions in the pathway cofactor biosynthesis; thiamine diphosphate biosynthesis. Its function is as follows. Catalyzes the rearrangement of 1-deoxy-D-xylulose 5-phosphate (DXP) to produce the thiazole phosphate moiety of thiamine. Sulfur is provided by the thiocarboxylate moiety of the carrier protein ThiS. In vitro, sulfur can be provided by H(2)S. This Alkalilimnicola ehrlichii (strain ATCC BAA-1101 / DSM 17681 / MLHE-1) protein is Thiazole synthase.